The sequence spans 116 residues: Proline-rich protein 9 (116 aa).

The protein is Proline-rich protein 9 (Prr9) of Mus musculus (Mouse).